The sequence spans 118 residues: Large ribosomal subunit protein uL18 (118 aa).

The tract at residues 1–26 is disordered; sequence MISKPDKNKIRQKRHRRVRGKLSGTA. A compositionally biased stretch (basic residues) spans 10–20; it reads IRQKRHRRVRG.

It belongs to the universal ribosomal protein uL18 family. In terms of assembly, part of the 50S ribosomal subunit; part of the 5S rRNA/L5/L18/L25 subcomplex. Contacts the 5S and 23S rRNAs.

Functionally, this is one of the proteins that bind and probably mediate the attachment of the 5S RNA into the large ribosomal subunit, where it forms part of the central protuberance. The polypeptide is Large ribosomal subunit protein uL18 (Streptococcus equi subsp. zooepidemicus (strain H70)).